Here is a 121-residue protein sequence, read N- to C-terminus: Large ribosomal subunit protein bL12 (121 aa).

The protein belongs to the bacterial ribosomal protein bL12 family. In terms of assembly, homodimer. Part of the ribosomal stalk of the 50S ribosomal subunit. Forms a multimeric L10(L12)X complex, where L10 forms an elongated spine to which 2 to 4 L12 dimers bind in a sequential fashion. Binds GTP-bound translation factors.

In terms of biological role, forms part of the ribosomal stalk which helps the ribosome interact with GTP-bound translation factors. Is thus essential for accurate translation. This chain is Large ribosomal subunit protein bL12, found in Aeromonas hydrophila subsp. hydrophila (strain ATCC 7966 / DSM 30187 / BCRC 13018 / CCUG 14551 / JCM 1027 / KCTC 2358 / NCIMB 9240 / NCTC 8049).